Here is a 1090-residue protein sequence, read N- to C-terminus: UPF0507 protein EC1118_1M3_1541g (1090 aa).

The VPS9 domain maps to 289 to 436 (FSVNQLLTDF…FEDFNKNTGN (148 aa)).

This sequence belongs to the UPF0507 family.

This chain is UPF0507 protein EC1118_1M3_1541g, found in Saccharomyces cerevisiae (strain Lalvin EC1118 / Prise de mousse) (Baker's yeast).